The sequence spans 506 residues: GMP synthase [glutamine-hydrolyzing] (506 aa).

Positions 4–192 constitute a Glutamine amidotransferase type-1 domain; sequence KLIILDFGSQ…FLDICGMKRD (189 aa). Residue cysteine 79 is the Nucleophile of the active site. Catalysis depends on residues histidine 167 and glutamate 169. Residues 193–381 enclose the GMPS ATP-PPase domain; it reads WTPASFIEAT…LGMMPHLIHR (189 aa). 220 to 226 is a binding site for ATP; that stretch reads SGGVDSS.

As to quaternary structure, homodimer.

The enzyme catalyses XMP + L-glutamine + ATP + H2O = GMP + L-glutamate + AMP + diphosphate + 2 H(+). The protein operates within purine metabolism; GMP biosynthesis; GMP from XMP (L-Gln route): step 1/1. In terms of biological role, catalyzes the synthesis of GMP from XMP. This is GMP synthase [glutamine-hydrolyzing] from Porphyromonas gingivalis (strain ATCC BAA-308 / W83).